The sequence spans 384 residues: Autophagy-related protein 25 (384 aa).

2 coiled-coil regions span residues 132-236 (KETA…RRAS) and 342-379 (KKNNQTDKDQEIASLRNRLSEMEQNYERVLATMEQWKT). Positions 224–247 (ESRLSNMNKRRASPRDDAEAEPKR) are disordered. The segment covering 236–247 (SPRDDAEAEPKR) has biased composition (basic and acidic residues).

It belongs to the ADIP family.

It localises to the preautophagosomal structure membrane. Its function is as follows. Specifically required for selective degradation of peroxisomes via macropexophagy. This Pichia angusta (Yeast) protein is Autophagy-related protein 25 (ATG25).